We begin with the raw amino-acid sequence, 562 residues long: Scaffold protein FimL (562 aa).

In terms of assembly, interacts with PilG and FimV.

The protein resides in the cytoplasm. Regulates multiple virulence functions including type IV pilus (T4P)-mediated assembly and twitching motility as well as cAMP-dependent virulence gene expression. Regulates intracellular cyclic AMP (cAMP) levels through the activation of adenylate cyclase CyaB. Also functions as a scaffold linking FimV and PilG at the pole, where type IV pilus (T4P), the Chp chemosensory system and the CyaB adenylate cyclase interact. The protein is Scaffold protein FimL (fimL) of Pseudomonas aeruginosa (strain ATCC 15692 / DSM 22644 / CIP 104116 / JCM 14847 / LMG 12228 / 1C / PRS 101 / PAO1).